The following is a 426-amino-acid chain: Protein TolB homolog (426 aa).

Residues 1-19 (MFLRSFLCLLCLLPSILYC) form the signal peptide.

This sequence belongs to the TolB family.

The protein resides in the periplasm. The polypeptide is Protein TolB homolog (Chlamydia muridarum (strain MoPn / Nigg)).